The following is a 479-amino-acid chain: Glutamate--tRNA ligase (479 aa).

The short motif at 21-31 (PSPTGYLHVGG) is the 'HIGH' region element. The short motif at 248-252 (KLSKR) is the 'KMSKS' region element. Position 251 (Lys251) interacts with ATP.

Belongs to the class-I aminoacyl-tRNA synthetase family. Glutamate--tRNA ligase type 1 subfamily. As to quaternary structure, monomer.

It localises to the cytoplasm. It carries out the reaction tRNA(Glu) + L-glutamate + ATP = L-glutamyl-tRNA(Glu) + AMP + diphosphate. Catalyzes the attachment of glutamate to tRNA(Glu) in a two-step reaction: glutamate is first activated by ATP to form Glu-AMP and then transferred to the acceptor end of tRNA(Glu). The chain is Glutamate--tRNA ligase from Actinobacillus pleuropneumoniae serotype 7 (strain AP76).